The primary structure comprises 426 residues: Maintenance of mitochondrial morphology protein 1 (426 aa).

Residues Met1–Gly100 are Lumenal-facing. Residues Phe101–Phe121 traverse the membrane as a helical segment. The Cytoplasmic segment spans residues Ser122 to Leu426. Residues Pro194–Pro409 form the SMP-LTD domain.

It belongs to the MMM1 family. In terms of assembly, homodimer. Component of the ER-mitochondria encounter structure (ERMES) or MDM complex, composed of MMM1, MDM10, MDM12 and MDM34. An MMM1 homodimer associates with one molecule of MDM12 on each side in a pairwise head-to-tail manner, and the SMP-LTD domains of MMM1 and MDM12 generate a continuous hydrophobic tunnel for phospholipid trafficking.

It is found in the endoplasmic reticulum membrane. In terms of biological role, component of the ERMES/MDM complex, which serves as a molecular tether to connect the endoplasmic reticulum (ER) and mitochondria. Components of this complex are involved in the control of mitochondrial shape and protein biogenesis, and function in nonvesicular lipid trafficking between the ER and mitochondria. The MDM12-MMM1 subcomplex functions in the major beta-barrel assembly pathway that is responsible for biogenesis of all outer membrane beta-barrel proteins, and acts in a late step after the SAM complex. The MDM10-MDM12-MMM1 subcomplex further acts in the TOM40-specific pathway after the action of the MDM12-MMM1 complex. Essential for establishing and maintaining the structure of mitochondria and maintenance of mtDNA nucleoids. The protein is Maintenance of mitochondrial morphology protein 1 of Saccharomyces cerevisiae (strain AWRI1631) (Baker's yeast).